A 222-amino-acid chain; its full sequence is Cyclin-U2-1 (222 aa).

The protein belongs to the cyclin family. Cyclin U/P subfamily. Interacts with CDKA-1. Expressed in roots, stems and flowers. Expressed in the shoot apex, leaf primordia and young leaves.

The protein is Cyclin-U2-1 (CYCU2-1) of Arabidopsis thaliana (Mouse-ear cress).